Reading from the N-terminus, the 893-residue chain is DNA mismatch repair protein MutS (893 aa).

631 to 638 (GPNMAGKS) is a binding site for ATP. The segment at 821–858 (AGRPRVAVRQPQGGRRGASTGQLGLFGMEPAQGGTGVT) is disordered.

Belongs to the DNA mismatch repair MutS family.

Functionally, this protein is involved in the repair of mismatches in DNA. It is possible that it carries out the mismatch recognition step. This protein has a weak ATPase activity. This chain is DNA mismatch repair protein MutS, found in Myxococcus xanthus (strain DK1622).